The primary structure comprises 470 residues: Poly(A) polymerase catalytic subunit (470 aa).

Residues Asp192 and Asp194 contribute to the active site.

This sequence belongs to the poxviridae poly(A) polymerase catalytic subunit family. In terms of assembly, heterodimer of a large (catalytic) subunit and a small (regulatory) subunit.

It carries out the reaction RNA(n) + ATP = RNA(n)-3'-adenine ribonucleotide + diphosphate. Polymerase that creates the 3'-poly(A) tail of mRNA's. This Odocoileus hemionus (Mule deer) protein is Poly(A) polymerase catalytic subunit (PAPL).